The sequence spans 67 residues: uncharacterized protein (67 aa).

Helical transmembrane passes span 10–30 (EFFI…ITMW) and 40–60 (LMVG…WMVF).

It belongs to the plectrovirus ORF10 family.

It is found in the host membrane. This is an uncharacterized protein from Spiroplasma citri (SpV1).